Consider the following 167-residue polypeptide: uncharacterized protein (167 aa).

Its subcellular location is the plastid. It localises to the chloroplast. This is an uncharacterized protein from Mesostigma viride (Green alga).